Here is a 533-residue protein sequence, read N- to C-terminus: Calcium uptake protein 1 homolog, mitochondrial (533 aa).

A mitochondrion-targeting transit peptide spans 1–13 (MLRHNFRSSIFIR). Residues 127–147 (PFRPEASQKEESTDSGTEIEV) are disordered. EF-hand domains lie at 270 to 305 (TSHA…IMSQ), 337 to 358 (KDGK…LQHD), and 465 to 500 (LSDH…RMRR). Residues Asp-283, Asp-285, Asn-287, and Glu-294 each contribute to the Ca(2+) site.

It belongs to the MICU1 family. MICU1 subfamily.

It localises to the mitochondrion intermembrane space. It is found in the mitochondrion inner membrane. Its function is as follows. Calcium sensor of the mitochondrial calcium uniporter (mcu-1) channel, which senses calcium level via its EF-hand domains. At low calcium levels, micu-1 occludes the pore of the mcu-1 channel, preventing mitochondrial calcium uptake. At higher calcium levels, calcium-binding to micu-1 induces a conformational change that weakens mcu-1-micu-1 interactions and moves micu-1 away from the pore, allowing calcium permeation through the mcu-1 channel. Also required to protect against manganese toxicity by preventing manganese uptake by mcu-1. Modulates the activity of the mitochondrial calcium uniporter protein mcu-1 depending on the level of intracellular calcium in PLM touch receptor neurons following axonal injury. This chain is Calcium uptake protein 1 homolog, mitochondrial, found in Caenorhabditis briggsae.